The chain runs to 504 residues: Cytochrome P450 71B7 (504 aa).

Residues 1 to 21 (MSILLCFLCLLPVFLVSLSIL) traverse the membrane as a helical segment. A Glycyl lysine isopeptide (Lys-Gly) (interchain with G-Cter in ubiquitin) cross-link involves residue K82. C446 contributes to the heme binding site.

Belongs to the cytochrome P450 family. Heme is required as a cofactor. As to expression, highly expressed in rosette leaves. Also expressed in roots, leaves, flowers, and siliques.

It localises to the membrane. The chain is Cytochrome P450 71B7 (CYP71B7) from Arabidopsis thaliana (Mouse-ear cress).